Reading from the N-terminus, the 225-residue chain is Ribonuclease 3 (225 aa).

Residues 7 to 129 (IPRLCRTLGY…IIGAIYLDSE (123 aa)) enclose the RNase III domain. Mg(2+) is bound at residue E42. D46 is a catalytic residue. Residues D115 and E118 each coordinate Mg(2+). E118 is a catalytic residue. The DRBM domain maps to 155–225 (DPKTLLQEHL…AAQVLELMKK (71 aa)).

It belongs to the ribonuclease III family. As to quaternary structure, homodimer. The cofactor is Mg(2+).

It is found in the cytoplasm. It carries out the reaction Endonucleolytic cleavage to 5'-phosphomonoester.. In terms of biological role, digests double-stranded RNA. Involved in the processing of primary rRNA transcript to yield the immediate precursors to the large and small rRNAs (23S and 16S). Processes some mRNAs, and tRNAs when they are encoded in the rRNA operon. Processes pre-crRNA and tracrRNA of type II CRISPR loci if present in the organism. In Shewanella halifaxensis (strain HAW-EB4), this protein is Ribonuclease 3.